The primary structure comprises 212 residues: Ribosomal RNA small subunit methyltransferase G (212 aa).

Residues Gly80, Leu85, 131-132, and Arg146 each bind S-adenosyl-L-methionine; that span reads AE.

The protein belongs to the methyltransferase superfamily. RNA methyltransferase RsmG family.

The protein localises to the cytoplasm. It carries out the reaction guanosine(527) in 16S rRNA + S-adenosyl-L-methionine = N(7)-methylguanosine(527) in 16S rRNA + S-adenosyl-L-homocysteine. Its function is as follows. Specifically methylates the N7 position of guanine in position 527 of 16S rRNA. This chain is Ribosomal RNA small subunit methyltransferase G, found in Stenotrophomonas maltophilia (strain K279a).